The chain runs to 227 residues: MPEGRRLRRALAIALLALVAVTGLLMMAKEQQMGQEISPFDGHSNLALAQAVARGDTQGIHAQATQDRLRERGDRQVTLLQWAVLSQQPDSVQALLDLGADPAAAGLDGNSALHTAAMLQDAQYLRLLLAEGAQMNVRNAVTGATPLAAAVLAGREEQLRLLLAAGADTTLSDRLGDTPLHLAAKINRRTWRCCCCRPGPMPGRATSRASRSSFTSRKRRRICRMTN.

A signal peptide spans 1-35; the sequence is MPEGRRLRRALAIALLALVAVTGLLMMAKEQQMGQ. ANK repeat units follow at residues 75–104, 108–137, 142–171, and 175–204; these read RQVT…DPAA, DGNS…QMNV, TGAT…DTTL, and LGDT…MPGR.

Its function is as follows. Cell-protective protein that neutralizes the intracellular lysis capacity of phospholipase A1 through a direct interaction with the enzyme. The chain is Protein PhlB (phlB) from Serratia liquefaciens.